The following is a 282-amino-acid chain: Putative 4-diphosphocytidyl-2-C-methyl-D-erythritol kinase (282 aa).

The active site involves Lys-9. Position 93 to 103 (Pro-93 to Ala-103) interacts with ATP. Asp-135 is a catalytic residue.

Belongs to the GHMP kinase family. IspE subfamily.

The catalysed reaction is 4-CDP-2-C-methyl-D-erythritol + ATP = 4-CDP-2-C-methyl-D-erythritol 2-phosphate + ADP + H(+). In terms of biological role, catalyzes the phosphorylation of the position 2 hydroxy group of 4-diphosphocytidyl-2C-methyl-D-erythritol. In Staphylococcus aureus (strain MSSA476), this protein is Putative 4-diphosphocytidyl-2-C-methyl-D-erythritol kinase.